A 432-amino-acid polypeptide reads, in one-letter code: Putative cyclin-F1-4 (432 aa).

Belongs to the cyclin family. Cyclin F subfamily.

In Oryza sativa subsp. japonica (Rice), this protein is Putative cyclin-F1-4 (CycF1-4).